Reading from the N-terminus, the 324-residue chain is HPr kinase/phosphorylase (324 aa).

Catalysis depends on residues H146 and K167. 161 to 168 (GDSGLGKS) is a binding site for ATP. S168 contacts Mg(2+). The active-site Proton acceptor; for phosphorylation activity. Proton donor; for dephosphorylation activity is D185. An important for the catalytic mechanism of both phosphorylation and dephosphorylation region spans residues 209–218 (LEVRGLGLLD). E210 is a Mg(2+) binding site. R250 is a catalytic residue. An important for the catalytic mechanism of dephosphorylation region spans residues 271 to 276 (QVAAGR).

This sequence belongs to the HPrK/P family. In terms of assembly, homohexamer. The cofactor is Mg(2+).

It catalyses the reaction [HPr protein]-L-serine + ATP = [HPr protein]-O-phospho-L-serine + ADP + H(+). The catalysed reaction is [HPr protein]-O-phospho-L-serine + phosphate + H(+) = [HPr protein]-L-serine + diphosphate. Its function is as follows. Catalyzes the ATP- as well as the pyrophosphate-dependent phosphorylation of a specific serine residue in HPr, a phosphocarrier protein of the phosphoenolpyruvate-dependent sugar phosphotransferase system (PTS). HprK/P also catalyzes the pyrophosphate-producing, inorganic phosphate-dependent dephosphorylation (phosphorolysis) of seryl-phosphorylated HPr (P-Ser-HPr). The sequence is that of HPr kinase/phosphorylase from Ralstonia pickettii (strain 12J).